A 253-amino-acid chain; its full sequence is Glucosamine-6-phosphate deaminase (253 aa).

The active-site Proton acceptor; for enolization step is the D67. N136 functions as the For ring-opening step in the catalytic mechanism. The active-site Proton acceptor; for ring-opening step is H138. E143 (for ring-opening step) is an active-site residue.

This sequence belongs to the glucosamine/galactosamine-6-phosphate isomerase family. NagB subfamily.

The enzyme catalyses alpha-D-glucosamine 6-phosphate + H2O = beta-D-fructose 6-phosphate + NH4(+). It participates in amino-sugar metabolism; N-acetylneuraminate degradation; D-fructose 6-phosphate from N-acetylneuraminate: step 5/5. Catalyzes the reversible isomerization-deamination of glucosamine 6-phosphate (GlcN6P) to form fructose 6-phosphate (Fru6P) and ammonium ion. The chain is Glucosamine-6-phosphate deaminase from Thermoanaerobacter pseudethanolicus (strain ATCC 33223 / 39E) (Clostridium thermohydrosulfuricum).